We begin with the raw amino-acid sequence, 268 residues long: 4-hydroxy-tetrahydrodipicolinate reductase (268 aa).

NAD(+)-binding positions include 8–13 (GAAGRM) and Glu-34. Arg-35 is a binding site for NADP(+). Residues 96–98 (GST) and 120–123 (SPNM) each bind NAD(+). The Proton donor/acceptor role is filled by His-153. His-154 contributes to the (S)-2,3,4,5-tetrahydrodipicolinate binding site. The active-site Proton donor is Lys-157. 163–164 (GT) contacts (S)-2,3,4,5-tetrahydrodipicolinate.

This sequence belongs to the DapB family.

The protein localises to the cytoplasm. The enzyme catalyses (S)-2,3,4,5-tetrahydrodipicolinate + NAD(+) + H2O = (2S,4S)-4-hydroxy-2,3,4,5-tetrahydrodipicolinate + NADH + H(+). It carries out the reaction (S)-2,3,4,5-tetrahydrodipicolinate + NADP(+) + H2O = (2S,4S)-4-hydroxy-2,3,4,5-tetrahydrodipicolinate + NADPH + H(+). It participates in amino-acid biosynthesis; L-lysine biosynthesis via DAP pathway; (S)-tetrahydrodipicolinate from L-aspartate: step 4/4. Its function is as follows. Catalyzes the conversion of 4-hydroxy-tetrahydrodipicolinate (HTPA) to tetrahydrodipicolinate. In Anaeromyxobacter sp. (strain Fw109-5), this protein is 4-hydroxy-tetrahydrodipicolinate reductase.